The chain runs to 443 residues: Minovincinine 19-hydroxy-O-acetyltransferase (443 aa).

Catalysis depends on His-157, which acts as the Proton acceptor. The Nuclear localization signal signature appears at 215 to 222 (RKRFLFSP). The stretch at 316-343 (TKLVIGELRKAKDKLKNLSQEKLNYVAR) forms a coiled coil. Asp-384 acts as the Proton acceptor in catalysis.

This sequence belongs to the plant acyltransferase family. In terms of assembly, monomer. Expressed in cortical cells of the root tip, especially in hairy roots, as well as in etiolated seedlings. Mostly expressed in roots, and, at lower levels, in leaves.

The protein localises to the cytoplasm. It localises to the nucleus. It carries out the reaction (+)-minovincinine + acetyl-CoA = (+)-echitovenine + CoA. Its pathway is alkaloid biosynthesis. In terms of biological role, component of the monoterpenoid indole alkaloids (MIAs, e.g. echitovenine, tabersonine, lochnericine, 19-hydroxytabersonine and horhammericine) biosynthetic pathway; MIAs are used in cancer treatment and other medical applications. Acyltransferase catalyzing the conversion of (+)-minovincinine to (+)-echitovenine. The chain is Minovincinine 19-hydroxy-O-acetyltransferase from Catharanthus roseus (Madagascar periwinkle).